Reading from the N-terminus, the 116-residue chain is M-zodatoxin-Lt6a/b (116 aa).

A signal peptide spans 1–22 (MKYFVVALTLAVAFVCIEECKT). 2 consecutive propeptides follow at residues 23–44 (VEIG…EEAR) and 80–83 (EEAR). Short sequence motifs (processing quadruplet motif) lie at residues 41–44 (EEAR) and 80–83 (EEAR). Position 84 is a pyrrolidone carboxylic acid (glutamine 84).

Belongs to the cationic peptide 03 (latarcin) family. 06 subfamily. Post-translationally, cleavage of the propeptide depends on the processing quadruplet motif (XXXR, with at least one of X being E). As to expression, expressed by the venom gland.

Its subcellular location is the secreted. Functionally, does not have antimicrobial activity against neither Gram-positive bacteria (A.globiformis VKM Ac-1112 (MIC&gt;70 uM), and B.subtilis VKM B-501 (MIC&gt;70 uM)), nor Gram-negative bacteria (E.coli DH5-alpha (MIC&gt;70 uM), E.coli MH1 (MIC&gt;70 uM), and P.aeruginosa PAO1 (MIC&gt;70 uM)), nor yeasts (P.pastoris GS115 (MIC&gt;70 uM), and S.cerevisiae Y190 (MIC&gt;70 uM)). Does not have hemolytic activity against rabbit erythrocytes. However, it causes some conductance changes in planar bilayer membranes, without membrane rupture, suggesting a cytolytic function on other biological targets. It causes paralysis, but is not lethal when injected into insect (M.domestica) larvae. This chain is M-zodatoxin-Lt6a/b, found in Lachesana tarabaevi (Spider).